The following is a 109-amino-acid chain: uncharacterized protein (109 aa).

This is an uncharacterized protein from Bos taurus (Bovine).